Reading from the N-terminus, the 361-residue chain is MERITVTLGERSYPISIASGLFSQEAAFWPLRSGEQAMLVTNETLAKLYLAPVQRTLERAGVRVGQVILPDGEQFKSLSVLERVFSALLENNHGRDTTLVALGGGVIGDLIGFAAACYQRGVRFIQVPTTLLAQVDSSVGGKTAVNHPLGKNMIGAFYQPASVTIDIDCLQTLPLRELASGLAEVIKYGIIMDADFFRWLETQMDALLRLEPSALVYCIRRCCELKAQVVAEDEREQGRRALLNLGHTFGHAIEAEMGYGNWLHGEAVAAGTMMAARVACRLGYLQPQQAERMSALLTRAGLPVQGPAGMIPDAYLPHMLRDKKVLGGTLRLVLPTAIGSAEVFAGVSHDVVRDAIADCLA.

NAD(+) is bound by residues 71 to 76, 105 to 109, 129 to 130, Lys142, Lys151, and 169 to 172; these read DGEQFK, GVIGD, TT, and CLQT. 3 residues coordinate Zn(2+): Glu184, His247, and His264.

The protein belongs to the sugar phosphate cyclases superfamily. Dehydroquinate synthase family. Co(2+) serves as cofactor. It depends on Zn(2+) as a cofactor. Requires NAD(+) as cofactor.

It is found in the cytoplasm. The enzyme catalyses 7-phospho-2-dehydro-3-deoxy-D-arabino-heptonate = 3-dehydroquinate + phosphate. Its pathway is metabolic intermediate biosynthesis; chorismate biosynthesis; chorismate from D-erythrose 4-phosphate and phosphoenolpyruvate: step 2/7. Its function is as follows. Catalyzes the conversion of 3-deoxy-D-arabino-heptulosonate 7-phosphate (DAHP) to dehydroquinate (DHQ). This is 3-dehydroquinate synthase from Edwardsiella ictaluri (strain 93-146).